The following is a 386-amino-acid chain: Sulfate adenylyltransferase (386 aa).

Belongs to the sulfate adenylyltransferase family.

The enzyme catalyses sulfate + ATP + H(+) = adenosine 5'-phosphosulfate + diphosphate. Its pathway is sulfur metabolism; hydrogen sulfide biosynthesis; sulfite from sulfate: step 1/3. This is Sulfate adenylyltransferase from Persephonella marina (strain DSM 14350 / EX-H1).